The following is a 271-amino-acid chain: Short-chain dehydrogenase PC-15 (271 aa).

Residues Ile8, Thr34, Lys40, Asp56, Asn84, Tyr148, Lys152, Val181, and Thr183 each coordinate NADP(+). The active-site Proton acceptor is the Tyr148. The active-site Lowers pKa of active site Tyr is Lys152.

It belongs to the short-chain dehydrogenases/reductases (SDR) family.

The protein operates within secondary metabolite biosynthesis. In terms of biological role, short-chain dehydrogenase; part of the gene cluster that mediates the biosynthesis of the indole diterpenes penitrems. The geranylgeranyl diphosphate (GGPP) synthase penG catalyzes the first step in penitrem biosynthesis via conversion of farnesyl pyrophosphate and isopentyl pyrophosphate into geranylgeranyl pyrophosphate (GGPP). Condensation of indole-3-glycerol phosphate with GGPP by the prenyl transferase penC then forms 3-geranylgeranylindole (3-GGI). Epoxidation by the FAD-dependent monooxygenase penM leads to a epoxidized-GGI that is substrate of the terpene cyclase penB for cyclization to yield paspaline. Paspaline is subsequently converted to 13-desoxypaxilline by the cytochrome P450 monooxygenase penP, the latter being then converted to paxilline by the cytochrome P450 monooxygenase penQ. Paxilline is converted to beta-paxitriol via C-10 ketoreduction by the short-chain dehydrogenase PC-15 which can be monoprenylated at the C-20 by the indole diterpene prenyltransferase penD. A two-step elimination (acetylation and elimination) process performed by the O-acetyltransferase PC-16 and the P.simplicissimum ptmI-ortholog not yet identified in P.crustosum, leads to the production of the prenylated form of penijanthine. The FAD-linked oxidoreductase ptmO then converts the prenylated form of penijanthine into PC-M5 which is in turn transformed into PC-M4 by the aromatic dimethylallyltransferase PC-22. A series of oxidation steps involving 4 cytochrome P450 monooxygenases (PC-21, PC-05, PC-23, PC-20) and a FAD-dependent monooxygenase (PC-14) are required for the transformation of PC-M4 to penitrems A and E. Synthesis of these final products is proposed to proceed via penitrems D and C (PC-21, PC-05, PC-14) and penitrems B and F (PC-21, PC-05, PC-14, PC-23). In Penicillium crustosum (Blue mold fungus), this protein is Short-chain dehydrogenase PC-15.